The primary structure comprises 567 residues: Membrane protein insertase YidC (567 aa).

The chain crosses the membrane as a helical span at residues 3–23; it reads IQRIVLFAGLAIVSYLMVLAW. The disordered stretch occupies residues 32-80; the sequence is TEQVAEAQSSSDSSATNSTDDMILPEDNNAGGEEFATPETGSLASTSAN. Over residues 40–52 the composition is skewed to low complexity; the sequence is SSSDSSATNSTDD. Residues 70 to 80 show a composition bias toward polar residues; the sequence is ETGSLASTSAN. 5 consecutive transmembrane segments (helical) span residues 354-374, 378-398, 445-465, 485-505, and 522-542; these read FGWLFFISLPLFYILEWFYGL, WGVAIILLTVLVKAVFFHLSA, GGCLPILVQMPVFISLYWVLF, MDPYFILPILMGASMFIQMSL, and PLIFTVFFLWFPAGLVLYWLV.

This sequence belongs to the OXA1/ALB3/YidC family. Type 1 subfamily. Interacts with the Sec translocase complex via SecD. Specifically interacts with transmembrane segments of nascent integral membrane proteins during membrane integration.

Its subcellular location is the cell inner membrane. Functionally, required for the insertion and/or proper folding and/or complex formation of integral membrane proteins into the membrane. Involved in integration of membrane proteins that insert both dependently and independently of the Sec translocase complex, as well as at least some lipoproteins. Aids folding of multispanning membrane proteins. In Marinobacter nauticus (strain ATCC 700491 / DSM 11845 / VT8) (Marinobacter aquaeolei), this protein is Membrane protein insertase YidC.